A 198-amino-acid polypeptide reads, in one-letter code: Holliday junction branch migration complex subunit RuvA (198 aa).

The segment at 1–63 is domain I; that stretch reads MYDYIKGQLT…EDAHLLFGFH (63 aa). The interval 64 to 142 is domain II; the sequence is TKDEKDVFLK…EAPQETGNTK (79 aa). The segment at 143-147 is flexible linker; it reads ARSNK. A domain III region spans residues 148–198; that stretch reads AGNTQLDEAIEALLALGYKATELKKIRAFFEGTSETAEQYIKSALKLLMKG.

The protein belongs to the RuvA family. In terms of assembly, homotetramer. Forms an RuvA(8)-RuvB(12)-Holliday junction (HJ) complex. HJ DNA is sandwiched between 2 RuvA tetramers; dsDNA enters through RuvA and exits via RuvB. An RuvB hexamer assembles on each DNA strand where it exits the tetramer. Each RuvB hexamer is contacted by two RuvA subunits (via domain III) on 2 adjacent RuvB subunits; this complex drives branch migration. In the full resolvosome a probable DNA-RuvA(4)-RuvB(12)-RuvC(2) complex forms which resolves the HJ.

The protein resides in the cytoplasm. The RuvA-RuvB-RuvC complex processes Holliday junction (HJ) DNA during genetic recombination and DNA repair, while the RuvA-RuvB complex plays an important role in the rescue of blocked DNA replication forks via replication fork reversal (RFR). RuvA specifically binds to HJ cruciform DNA, conferring on it an open structure. The RuvB hexamer acts as an ATP-dependent pump, pulling dsDNA into and through the RuvAB complex. HJ branch migration allows RuvC to scan DNA until it finds its consensus sequence, where it cleaves and resolves the cruciform DNA. This chain is Holliday junction branch migration complex subunit RuvA, found in Streptococcus pyogenes serotype M18 (strain MGAS8232).